The sequence spans 387 residues: MTPTELNLKAKALLETHFDDIVLSGEISKITLHGSGHWYFDLKDERSSIACAMFKGANLKVGFKPAVGNFLELCGSVSLYPESGRYQFIATSMKKAGFGDLEAQFLALKERLQKEGLFDPRFKKSLPKFPKKVGIITSKTSAALQDMLKLIHQKEYFLAKIYIFDALTQGNNAPFSLIRALKKADDMDLDVLIIARGGGSREDLFCFNDENLAREIFKAKTPIISAIGHEIDYVISDFVADFRAPTPSAAIDTLFYSKLDIEQSLDLMEEKLMQLWNYKIQNYENLLLNLSKFFKFNSLPKIIDEKIKQSHNIEKQLNHLLANQMRYNELKLDKLQNAYLQHENFFNKSKKFICIRKNGKIANLEDLKSDDIVILSSQTSQKEAKIL.

It belongs to the XseA family. As to quaternary structure, heterooligomer composed of large and small subunits.

Its subcellular location is the cytoplasm. It carries out the reaction Exonucleolytic cleavage in either 5'- to 3'- or 3'- to 5'-direction to yield nucleoside 5'-phosphates.. Its function is as follows. Bidirectionally degrades single-stranded DNA into large acid-insoluble oligonucleotides, which are then degraded further into small acid-soluble oligonucleotides. The polypeptide is Exodeoxyribonuclease 7 large subunit (Campylobacter jejuni (strain RM1221)).